Here is a 256-residue protein sequence, read N- to C-terminus: Small ribosomal subunit protein eS1 (256 aa).

An N-acetylalanine; partial modification is found at Ala2.

The protein belongs to the eukaryotic ribosomal protein eS1 family. In terms of assembly, component of the small ribosomal subunit. Mature ribosomes consist of a small (40S) and a large (60S) subunit. The 40S subunit contains about 33 different proteins and 1 molecule of RNA (18S). The 60S subunit contains about 49 different proteins and 3 molecules of RNA (25S, 5.8S and 5S).

The protein localises to the cytoplasm. The polypeptide is Small ribosomal subunit protein eS1 (Lachancea thermotolerans (strain ATCC 56472 / CBS 6340 / NRRL Y-8284) (Yeast)).